Consider the following 471-residue polypeptide: ATP synthase subunit beta 2 (471 aa).

157–164 (GGAGVGKT) contributes to the ATP binding site.

This sequence belongs to the ATPase alpha/beta chains family. In terms of assembly, F-type ATPases have 2 components, CF(1) - the catalytic core - and CF(0) - the membrane proton channel. CF(1) has five subunits: alpha(3), beta(3), gamma(1), delta(1), epsilon(1). CF(0) has three main subunits: a(1), b(2) and c(9-12). The alpha and beta chains form an alternating ring which encloses part of the gamma chain. CF(1) is attached to CF(0) by a central stalk formed by the gamma and epsilon chains, while a peripheral stalk is formed by the delta and b chains.

It is found in the cell inner membrane. The enzyme catalyses ATP + H2O + 4 H(+)(in) = ADP + phosphate + 5 H(+)(out). Functionally, produces ATP from ADP in the presence of a proton gradient across the membrane. The catalytic sites are hosted primarily by the beta subunits. The polypeptide is ATP synthase subunit beta 2 (Pelobacter propionicus (strain DSM 2379 / NBRC 103807 / OttBd1)).